A 419-amino-acid chain; its full sequence is Cytosine permease (419 aa).

Topologically, residues 1-19 (MSQDNNFSQGPVPQSARKG) are cytoplasmic. A helical membrane pass occupies residues 20–39 (VLALTFVMLGLTFFSASMWT). At 40–51 (GGTLGTGLSYHD) the chain is on the periplasmic side. A helical transmembrane segment spans residues 52 to 71 (FFLAVLIGNLLLGIYTSFLG). Residues 72–100 (YIGAKTGLTTHLLARFSFGVKGSWLPSLL) lie on the Cytoplasmic side of the membrane. The chain crosses the membrane as a helical span at residues 101 to 120 (LGGTQVGWFGVGVAMFAIPV). Topologically, residues 121–127 (GKATGLD) are periplasmic. Residues 128 to 147 (INLLIAVSGLLMTVTVFFGI) traverse the membrane as a helical segment. The Cytoplasmic segment spans residues 148–152 (SALTV). A helical membrane pass occupies residues 153-172 (LSLIAVPAIACLGGYSVWLA). Over 173 to 192 (VNGMGGLDALKAVVPAQPLD) the chain is Periplasmic. Residues 193–212 (FNVALALVVGSFISAGTLTA) form a helical membrane-spanning segment. Residues 213–221 (DFVRFGRNA) lie on the Cytoplasmic side of the membrane. Residues 222–242 (KLAVLVAMVAFFLGNSLMFIF) traverse the membrane as a helical segment. Topologically, residues 243 to 257 (GAAGAAALGMADISD) are periplasmic. The chain crosses the membrane as a helical span at residues 258 to 277 (VMIAQGLLLPAIVVLGLNIW). Topologically, residues 278 to 300 (TTNDNALYASGLGFANITGMSSK) are cytoplasmic. The helical transmembrane segment at 301–320 (TLSVINGIIGTVCALWLYNN) threads the bilayer. A topological domain (periplasmic) is located at residue phenylalanine 321. Residues 322-341 (VGWLTFLSAAIPPVGGVIIA) traverse the membrane as a helical segment. Over 342–358 (DYLMNRRRYEHFATTRM) the chain is Cytoplasmic. The chain crosses the membrane as a helical span at residues 359–378 (MSVNWVAILAVALGIAAGHW). Residues 379–380 (LP) lie on the Periplasmic side of the membrane. Residues 381-400 (GIVPVNAVLGGALSYLILNP) form a helical membrane-spanning segment. Over 401-419 (ILNRKTTAAMTHVEANSVE) the chain is Cytoplasmic.

Belongs to the purine-cytosine permease (2.A.39) family.

Its subcellular location is the cell inner membrane. Its function is as follows. Required for cytosine transport into the cell. The chain is Cytosine permease (codB) from Escherichia coli O157:H7.